A 540-amino-acid polypeptide reads, in one-letter code: Membrane protein insertase YidC (540 aa).

The chain crosses the membrane as a helical span at residues 6–26; it reads NILLIALALVSFLLFQQWQVA. Positions 36–47 are enriched in low complexity; it reads QAQSSSSLPAPS. Residues 36-63 form a disordered region; sequence QAQSSSSLPAPSFADELDPVPGQQQASA. The next 4 membrane-spanning stretches (helical) occupy residues 342 to 362, 417 to 437, 455 to 475, and 496 to 516; these read AFIQSFVGNWGVAIICLTFIV, LGGCLPLVLQMPIFIALYWAL, LSAQDPYYILPLLMGASMFLI, and PVMFTFFFLFFPSGLVLYWLV.

Belongs to the OXA1/ALB3/YidC family. Type 1 subfamily. In terms of assembly, interacts with the Sec translocase complex via SecD. Specifically interacts with transmembrane segments of nascent integral membrane proteins during membrane integration.

The protein resides in the cell inner membrane. Required for the insertion and/or proper folding and/or complex formation of integral membrane proteins into the membrane. Involved in integration of membrane proteins that insert both dependently and independently of the Sec translocase complex, as well as at least some lipoproteins. Aids folding of multispanning membrane proteins. This is Membrane protein insertase YidC from Vibrio parahaemolyticus serotype O3:K6 (strain RIMD 2210633).